The chain runs to 236 residues: Large ribosomal subunit protein uL2 (236 aa).

Positions 198-236 (DHPFGGGGRQHPGRPKTVSRGTPPGRKVGSIAARRTGKR) are disordered.

This sequence belongs to the universal ribosomal protein uL2 family. Part of the 50S ribosomal subunit. Forms a bridge to the 30S subunit in the 70S ribosome.

Functionally, one of the primary rRNA binding proteins. Required for association of the 30S and 50S subunits to form the 70S ribosome, for tRNA binding and peptide bond formation. It has been suggested to have peptidyltransferase activity; this is somewhat controversial. Makes several contacts with the 16S rRNA in the 70S ribosome. This is Large ribosomal subunit protein uL2 from Methanothrix thermoacetophila (strain DSM 6194 / JCM 14653 / NBRC 101360 / PT) (Methanosaeta thermophila).